The chain runs to 888 residues: Tyrosine-protein kinase receptor UFO (888 aa).

The N-terminal stretch at 1–18 is a signal peptide; the sequence is MGRVPLAWWLALCCWGCA. Residues 19–86 form an interaction with GAS6 region; the sequence is AHKDTQTEAG…QTQVPLGEDW (68 aa). The Extracellular segment spans residues 19–445; it reads AHKDTQTEAG…PPRAFSWPWW (427 aa). 2 consecutive Ig-like C2-type domains span residues 30 to 122 and 133 to 216; these read PFVG…TFVS and PYFL…ATIT. A glycan (N-linked (GlcNAc...) asparagine) is linked at Asn-37. Cys-50 and Cys-111 are oxidised to a cystine. 2 N-linked (GlcNAc...) asparagine glycosylation sites follow: Asn-151 and Asn-192. A disulfide bridge connects residues Cys-154 and Cys-199. Fibronectin type-III domains are found at residues 221-325 and 330-422; these read RPHH…TTEG and PPEN…PWRP. Asn-333, Asn-339, and Asn-395 each carry an N-linked (GlcNAc...) asparagine glycan. A helical membrane pass occupies residues 446-466; it reads YVLLGALVAAACVLILALFLV. The Cytoplasmic portion of the chain corresponds to 467–888; sequence HRRKKETRYG…PAPPGQEDGA (422 aa). The Protein kinase domain maps to 530 to 801; it reads VALGKTLGEG…ELREDLENTL (272 aa). ATP-binding positions include 536-544 and Lys-561; that span reads LGEGEFGAV. Residue Asp-666 is the Proton acceptor of the active site. Phosphotyrosine; by autocatalysis occurs at positions 697, 773, and 815. The disordered stretch occupies residues 820–846; the sequence is EGGSHLEPRGAAGGADPPTQPDPKDSC. Phosphotyrosine; by autocatalysis is present on Tyr-860. The tract at residues 865-888 is disordered; it reads STAPGPTLSADRGCPAPPGQEDGA.

This sequence belongs to the protein kinase superfamily. Tyr protein kinase family. AXL/UFO subfamily. Heterodimer and heterotetramer with ligand GAS6. Interacts with CBL, GRB2, LCK, NCK2, PIK3R1, PIK3R2, PIK3R3, PLCG1, SOCS1 and TNS2. Part of a complex including AXL, TNK2 and GRB2, in which GRB2 promotes AXL recruitment by TNK2. In terms of processing, monoubiquitinated upon GAS6-binding. A very small proportion of the receptor could be subjected to polyubiquitination in a very transient fashion. Phosphorylated at tyrosine residues by autocatalysis, which activates kinase activity. In distinct substructures of a broad spectrum of developing tissues (in the late embryogenesis). In cells forming organ capsules as well as in connective tissue structures (in adult).

It localises to the cell membrane. The catalysed reaction is L-tyrosyl-[protein] + ATP = O-phospho-L-tyrosyl-[protein] + ADP + H(+). Activated by GAS6-binding and subsequent autophosphorylation. Receptor tyrosine kinase that transduces signals from the extracellular matrix into the cytoplasm by binding growth factor GAS6 and which is thus regulating many physiological processes including cell survival, cell proliferation, migration and differentiation. Ligand binding at the cell surface induces dimerization and autophosphorylation of AXL. Following activation by ligand, AXL binds and induces tyrosine phosphorylation of PI3-kinase subunits PIK3R1, PIK3R2 and PIK3R3; but also GRB2, PLCG1, LCK and PTPN11. Other downstream substrate candidates for AXL are CBL, NCK2, SOCS1 and TNS2. Recruitment of GRB2 and phosphatidylinositol 3 kinase regulatory subunits by AXL leads to the downstream activation of the AKT kinase. GAS6/AXL signaling plays a role in various processes such as endothelial cell survival during acidification by preventing apoptosis, optimal cytokine signaling during human natural killer cell development, hepatic regeneration, gonadotropin-releasing hormone neuron survival and migration, platelet activation, or regulation of thrombotic responses. Also plays an important role in inhibition of Toll-like receptors (TLRs)-mediated innate immune response. The protein is Tyrosine-protein kinase receptor UFO (Axl) of Mus musculus (Mouse).